A 28-amino-acid polypeptide reads, in one-letter code: Turritoxin F21-2 (28 aa).

In terms of tissue distribution, expressed by the venom duct.

The protein localises to the secreted. Functionally, potent inhibitor of human alpha-3-beta-2 nAChRs (IC(50)=566.2 nM). Irreversibly inhibits the acetylcholine-induced response on human alpha-7/CHRNA7 (55% inhibition at 5.6 uM) and alpha-3-beta-2/CHRNA3-CHRNB2 (91% inhibition) nAChRs. In Polystira nobilis (Sea snail), this protein is Turritoxin F21-2.